The primary structure comprises 363 residues: UDP-N-acetylglucosamine--N-acetylmuramyl-(pentapeptide) pyrophosphoryl-undecaprenol N-acetylglucosamine transferase (363 aa).

Residues 14-16, Asn122, Arg163, Ser190, and Gln285 contribute to the UDP-N-acetyl-alpha-D-glucosamine site; that span reads TGG.

It belongs to the glycosyltransferase 28 family. MurG subfamily.

It is found in the cell inner membrane. It catalyses the reaction di-trans,octa-cis-undecaprenyl diphospho-N-acetyl-alpha-D-muramoyl-L-alanyl-D-glutamyl-meso-2,6-diaminopimeloyl-D-alanyl-D-alanine + UDP-N-acetyl-alpha-D-glucosamine = di-trans,octa-cis-undecaprenyl diphospho-[N-acetyl-alpha-D-glucosaminyl-(1-&gt;4)]-N-acetyl-alpha-D-muramoyl-L-alanyl-D-glutamyl-meso-2,6-diaminopimeloyl-D-alanyl-D-alanine + UDP + H(+). Its pathway is cell wall biogenesis; peptidoglycan biosynthesis. Cell wall formation. Catalyzes the transfer of a GlcNAc subunit on undecaprenyl-pyrophosphoryl-MurNAc-pentapeptide (lipid intermediate I) to form undecaprenyl-pyrophosphoryl-MurNAc-(pentapeptide)GlcNAc (lipid intermediate II). The chain is UDP-N-acetylglucosamine--N-acetylmuramyl-(pentapeptide) pyrophosphoryl-undecaprenol N-acetylglucosamine transferase from Prochlorococcus marinus (strain MIT 9312).